We begin with the raw amino-acid sequence, 379 residues long: Hydrogenase expression/formation protein HupD (379 aa).

Residues C36, C64, and C67 each coordinate Fe cation.

This sequence belongs to the HypD family.

In Azotobacter chroococcum mcd 1, this protein is Hydrogenase expression/formation protein HupD (hupD).